The primary structure comprises 99 residues: MSEKTIVKKETNVDFKKPKMYKVILLNDDYTTMDFVVEILITVFHKTAADATRIMLDVHRKGKGVVGVYTYDIARSKIALVEKMAAEREFPLAAVMEPE.

Belongs to the ClpS family. As to quaternary structure, binds to the N-terminal domain of the chaperone ClpA.

In terms of biological role, involved in the modulation of the specificity of the ClpAP-mediated ATP-dependent protein degradation. In Acetivibrio thermocellus (strain ATCC 27405 / DSM 1237 / JCM 9322 / NBRC 103400 / NCIMB 10682 / NRRL B-4536 / VPI 7372) (Clostridium thermocellum), this protein is ATP-dependent Clp protease adapter protein ClpS.